The chain runs to 359 residues: Nicotinate-nucleotide--dimethylbenzimidazole phosphoribosyltransferase (359 aa).

Glu-318 (proton acceptor) is an active-site residue.

The protein belongs to the CobT family. In terms of assembly, homodimer.

The catalysed reaction is 5,6-dimethylbenzimidazole + nicotinate beta-D-ribonucleotide = alpha-ribazole 5'-phosphate + nicotinate + H(+). It functions in the pathway nucleoside biosynthesis; alpha-ribazole biosynthesis; alpha-ribazole from 5,6-dimethylbenzimidazole: step 1/2. In terms of biological role, catalyzes the synthesis of alpha-ribazole-5'-phosphate from nicotinate mononucleotide (NAMN) and 5,6-dimethylbenzimidazole (DMB). The polypeptide is Nicotinate-nucleotide--dimethylbenzimidazole phosphoribosyltransferase (Escherichia coli O17:K52:H18 (strain UMN026 / ExPEC)).